The following is a 119-amino-acid chain: UPF0102 protein GFO_3098 (119 aa).

This sequence belongs to the UPF0102 family.

The sequence is that of UPF0102 protein GFO_3098 from Christiangramia forsetii (strain DSM 17595 / CGMCC 1.15422 / KT0803) (Gramella forsetii).